Reading from the N-terminus, the 1219-residue chain is FYVE, RhoGEF and PH domain-containing protein 5 (1219 aa).

4 disordered regions span residues 1 to 85 (MGSP…SCQI), 94 to 113 (EEDFSPTLTENPYEIFPTES), 201 to 227 (SDTQAASGTLSGYSTWEEGDSEGGQVP), and 310 to 367 (GRES…PSSV). Positions 23-50 (EVFEEDSADAAEGEDQIEQEEPPNCDEE) are enriched in acidic residues. The segment covering 201–214 (SDTQAASGTLSGYS) has biased composition (polar residues). Over residues 319-337 (REPEGAGLDSHRVRRKEDN) the composition is skewed to basic and acidic residues. The segment covering 346–356 (SSGSFSQRSHL) has biased composition (polar residues). Over residues 357-367 (PSSGTSTPSSV) the composition is skewed to low complexity. Residue T555 is modified to Phosphothreonine. Over residues 586-599 (ESKQQSSEQEAESA) the composition is skewed to low complexity. Residues 586–644 (ESKQQSSEQEAESAYTEPYKVCPISAAPREDLTSDEEQGSSEEEDSASRDPSLSHKGEG) are disordered. Over residues 618 to 630 (TSDEEQGSSEEED) the composition is skewed to acidic residues. The segment covering 631–644 (SASRDPSLSHKGEG) has biased composition (basic and acidic residues). Positions 647 to 840 (RALVIAQELL…SKVTDRANES (194 aa)) constitute a DH domain. The PH 1 domain occupies 869-963 (EFLKEGTLMR…WHYCLSRALP (95 aa)). The FYVE-type zinc finger occupies 998-1057 (VTHAMMCMNCGCDFSLTVRRHHCHACGKIVCRNCSRNKYPLKCLKNRMAKVCDGCFRELK). Zn(2+) is bound by residues C1004, C1007, C1020, C1023, C1028, C1031, C1049, and C1052. Positions 1120-1218 (GSAISGYLSR…WMEAMEDASV (99 aa)) constitute a PH 2 domain.

Expressed in highly vascularized tissues, such as lung, kidney and ovary.

It localises to the cytoplasm. The protein localises to the cytoskeleton. The protein resides in the cell projection. Its subcellular location is the ruffle membrane. It is found in the endoplasmic reticulum. It localises to the golgi apparatus. The protein localises to the early endosome. Functionally, activates CDC42, a member of the Ras-like family of Rho- and Rac proteins, by exchanging bound GDP for free GTP. Mediates VEGF-induced CDC42 activation. May regulate proangiogenic action of VEGF in vascular endothelial cells, including network formation, directional movement and proliferation. May play a role in regulating the actin cytoskeleton and cell shape. The sequence is that of FYVE, RhoGEF and PH domain-containing protein 5 (Fgd5) from Mus musculus (Mouse).